We begin with the raw amino-acid sequence, 29 residues long: Prolamin alpha-1 (29 aa).

This chain is Prolamin alpha-1, found in Dactylis glomerata (Orchard grass).